Consider the following 300-residue polypeptide: MSATTPLLESRLQSLPLLARGKVRDNYAVGSDRLLMVASDRLSAFDVVMGEPIPGKGELLTRMALFWFARLGHIVPNHLTGDAPESVVSAAERSQVTGRSMLVKRLKPLPVEAVVRGYLAGSGWKEYQHNGQVCGVKLPPGLKNASKLPSPIFTPATKAEMGEHDENIPFERMVEIIGAPLAEQVRRVAIALYETAAAFALGKGIIIADTKFEFGLDEAGTLTLMDEVLTPDSSRFWPVEGYAEGINPPSYDKQFVRDWLEQAVVDGRPWNKQAPAPALPADVVARTAAKYREALERLTA.

It belongs to the SAICAR synthetase family.

It carries out the reaction 5-amino-1-(5-phospho-D-ribosyl)imidazole-4-carboxylate + L-aspartate + ATP = (2S)-2-[5-amino-1-(5-phospho-beta-D-ribosyl)imidazole-4-carboxamido]succinate + ADP + phosphate + 2 H(+). Its pathway is purine metabolism; IMP biosynthesis via de novo pathway; 5-amino-1-(5-phospho-D-ribosyl)imidazole-4-carboxamide from 5-amino-1-(5-phospho-D-ribosyl)imidazole-4-carboxylate: step 1/2. This Methylibium petroleiphilum (strain ATCC BAA-1232 / LMG 22953 / PM1) protein is Phosphoribosylaminoimidazole-succinocarboxamide synthase.